Consider the following 138-residue polypeptide: ATP synthase epsilon chain (138 aa).

The protein belongs to the ATPase epsilon chain family. As to quaternary structure, F-type ATPases have 2 components, CF(1) - the catalytic core - and CF(0) - the membrane proton channel. CF(1) has five subunits: alpha(3), beta(3), gamma(1), delta(1), epsilon(1). CF(0) has three main subunits: a, b and c.

The protein resides in the cell inner membrane. Functionally, produces ATP from ADP in the presence of a proton gradient across the membrane. The sequence is that of ATP synthase epsilon chain from Psychrobacter cryohalolentis (strain ATCC BAA-1226 / DSM 17306 / VKM B-2378 / K5).